Consider the following 260-residue polypeptide: Hydroxypyruvate/pyruvate aldolase Bphyt_0320 (260 aa).

Residue His48 is the Proton acceptor of the active site. A divalent metal cation is bound by residues Glu157 and Asp183.

Belongs to the HpcH/HpaI aldolase family. The cofactor is Mn(2+). Requires Mg(2+) as cofactor. Co(2+) is required as a cofactor.

It catalyses the reaction D-glyceraldehyde + 3-hydroxypyruvate = 2-dehydro-D-gluconate. The enzyme catalyses D-glyceraldehyde + pyruvate = 2-dehydro-3-deoxy-L-galactonate. It carries out the reaction 2-dehydro-3-deoxy-D-gluconate = D-glyceraldehyde + pyruvate. Its function is as follows. Aldolase which can catalyze in vitro the aldolisation reaction between hydroxypyruvate (HPA) or pyruvate (PA) and D-glyceraldehyde (D-GA). The condensation of hydroxypyruvate and D-glyceraldehyde produces 2-dehydro-D-gluconate. The condensation of pyruvate and D-glyceraldehyde produces 2-dehydro-3-deoxy-L-galactonate as the major product and 2-dehydro-3-deoxy-D-gluconate. Also catalyzes the retro-aldol type decarboxylation of oxaloacetate, a general property of known pyruvate aldolases. This chain is Hydroxypyruvate/pyruvate aldolase Bphyt_0320, found in Paraburkholderia phytofirmans (strain DSM 17436 / LMG 22146 / PsJN) (Burkholderia phytofirmans).